The primary structure comprises 488 residues: Inosine-5'-monophosphate dehydrogenase (488 aa).

2 consecutive CBS domains span residues 95–153 and 157–213; these read VITN…SIKI and MTKE…PHAA. NAD(+)-binding positions include Asp-250 and 300 to 302; that span reads GIG. K(+) contacts are provided by Gly-302 and Gly-304. Ser-305 contributes to the IMP binding site. Cys-307 provides a ligand contact to K(+). Cys-307 serves as the catalytic Thioimidate intermediate. IMP contacts are provided by residues 340–342, 363–364, and 387–391; these read DGG, GS, and YRGMG. Arg-403 (proton acceptor) is an active-site residue. Glu-417 contacts IMP. The disordered stretch occupies residues 467–488; that stretch reads AGLAESHPHNVQITKESPNYSF. K(+)-binding residues include Glu-471, Ser-472, and His-473. Residues 475-488 show a composition bias toward polar residues; that stretch reads HNVQITKESPNYSF.

This sequence belongs to the IMPDH/GMPR family. Homotetramer. K(+) is required as a cofactor.

It catalyses the reaction IMP + NAD(+) + H2O = XMP + NADH + H(+). Its pathway is purine metabolism; XMP biosynthesis via de novo pathway; XMP from IMP: step 1/1. Its activity is regulated as follows. Mycophenolic acid (MPA) is a non-competitive inhibitor that prevents formation of the closed enzyme conformation by binding to the same site as the amobile flap. In contrast, mizoribine monophosphate (MZP) is a competitive inhibitor that induces the closed conformation. MPA is a potent inhibitor of mammalian IMPDHs but a poor inhibitor of the bacterial enzymes. MZP is a more potent inhibitor of bacterial IMPDH. In terms of biological role, catalyzes the conversion of inosine 5'-phosphate (IMP) to xanthosine 5'-phosphate (XMP), the first committed and rate-limiting step in the de novo synthesis of guanine nucleotides, and therefore plays an important role in the regulation of cell growth. This is Inosine-5'-monophosphate dehydrogenase from Staphylococcus haemolyticus (strain JCSC1435).